A 199-amino-acid polypeptide reads, in one-letter code: uncharacterized protein (199 aa).

Residues 1–28 form the signal peptide; that stretch reads MKKLATVGSLIVTSTLVFSSMPFQNAHA.

The protein localises to the secreted. This is an uncharacterized protein from Staphylococcus aureus (strain NCTC 8325 / PS 47).